A 360-amino-acid polypeptide reads, in one-letter code: 3-isopropylmalate dehydrogenase (360 aa).

Residue 76 to 89 coordinates NAD(+); that stretch reads GPKWDTIERDIRPE. Arginine 96, arginine 106, arginine 134, and aspartate 224 together coordinate substrate. Mg(2+)-binding residues include aspartate 224, aspartate 248, and aspartate 252. 282–294 provides a ligand contact to NAD(+); sequence GSAPDIAGQGIAN.

This sequence belongs to the isocitrate and isopropylmalate dehydrogenases family. LeuB type 1 subfamily. In terms of assembly, homodimer. Mg(2+) is required as a cofactor. Mn(2+) serves as cofactor.

It is found in the cytoplasm. It carries out the reaction (2R,3S)-3-isopropylmalate + NAD(+) = 4-methyl-2-oxopentanoate + CO2 + NADH. The protein operates within amino-acid biosynthesis; L-leucine biosynthesis; L-leucine from 3-methyl-2-oxobutanoate: step 3/4. Catalyzes the oxidation of 3-carboxy-2-hydroxy-4-methylpentanoate (3-isopropylmalate) to 3-carboxy-4-methyl-2-oxopentanoate. The product decarboxylates to 4-methyl-2 oxopentanoate. This is 3-isopropylmalate dehydrogenase from Pseudomonas syringae pv. tomato (strain ATCC BAA-871 / DC3000).